The following is a 373-amino-acid chain: MEKRRGPPPCQSGSGCSNPAKIRKAKDGAQLCGPCFSRNFEDDVHEAIVNNKLFKRGERVAIGASGGKDSTVLAYVMKTLNDRHDYGLDLQLLSIDEGIKGYRDDSLLAVEKNRVEYGLPLTILSYRDLYGWTMDDIVAKIGKKNNCTFCGVFRRQALDRGAFKIGATKLVTGHNADDMAETLLMNVLRGDIARLERCTNIVTGEEGDLPRAKPLKYCFERDIVMYARTNQLEYFYTECIYAPNAYRGYARKYVRDLEKVHPRAILDLIRSGEKVSVKKEVEMPTLKICERCGYMTSQKLCKACLLIEGLNTGNTDLGVRKSKKSKKVTVEADELNKEGGCGSGGGGGGCGCAGAEDAAENEETRQRLKDLQF.

This sequence belongs to the TtcA family. CTU1/NCS6/ATPBD3 subfamily.

The protein localises to the cytoplasm. It functions in the pathway tRNA modification; 5-methoxycarbonylmethyl-2-thiouridine-tRNA biosynthesis. Plays a central role in 2-thiolation of mcm(5)S(2)U at tRNA wobble positions of tRNA(Lys), tRNA(Glu) and tRNA(Gln). Directly binds tRNAs and probably acts by catalyzing adenylation of tRNAs, an intermediate required for 2-thiolation. It is unclear whether it acts as a sulfurtransferase that transfers sulfur from thiocarboxylated URM1 onto the uridine of tRNAs at wobble position. The protein is Cytoplasmic tRNA 2-thiolation protein 1 of Caenorhabditis elegans.